Reading from the N-terminus, the 253-residue chain is Triosephosphate isomerase (253 aa).

Residue 9 to 11 participates in substrate binding; sequence NWK. Catalysis depends on His-94, which acts as the Electrophile. The active-site Proton acceptor is the Glu-163. Residues Gly-169, Ser-209, and 230 to 231 contribute to the substrate site; that span reads GG.

This sequence belongs to the triosephosphate isomerase family. In terms of assembly, homodimer.

The protein resides in the cytoplasm. The catalysed reaction is D-glyceraldehyde 3-phosphate = dihydroxyacetone phosphate. It functions in the pathway carbohydrate biosynthesis; gluconeogenesis. The protein operates within carbohydrate degradation; glycolysis; D-glyceraldehyde 3-phosphate from glycerone phosphate: step 1/1. Functionally, involved in the gluconeogenesis. Catalyzes stereospecifically the conversion of dihydroxyacetone phosphate (DHAP) to D-glyceraldehyde-3-phosphate (G3P). The polypeptide is Triosephosphate isomerase (Dehalococcoides mccartyi (strain ATCC BAA-2100 / JCM 16839 / KCTC 5957 / BAV1)).